The chain runs to 359 residues: Replication-associated protein (359 aa).

A CRESS-DNA virus Rep endonuclease domain is found at 18–121 (RHRNANTFLT…PKDKWEKGTY (104 aa)). An RCR-1 motif is present at residues 25–28 (FLTY). A divalent metal cation is bound by residues E59, H67, and H69. Positions 67–69 (HCH) match the RCR-2 motif. The active-site For DNA cleavage activity is the Y107. The short motif at 107-110 (YILK) is the RCR-3 element. D111 is an a divalent metal cation binding site. Residues 181–193 (SASRLFPDIAEPY) form an oligomerization region. 235-242 (GPTRTGKT) is a binding site for ATP. The interval 258-276 (IDWSSYDEEAQYNVVDDIP) is transactivation. The short motif at 298 to 309 (KYGKRRKVASKS) is the Nuclear localization signal element.

Belongs to the geminiviridae Rep protein family. As to quaternary structure, homooligomer. Rep binds to repeated DNA motifs (iterons). Forms the O-complex, which is a Rep-DNA complex involved in the initiation of RCR. Part of the C- and V-complexes which are RepA-Rep-DNA complexes involved in the c-sense and v-sense transcription. Mg(2+) serves as cofactor. Requires Mn(2+) as cofactor.

It is found in the host nucleus. In terms of biological role, essential for the replication of viral ssDNA. The closed circular ssDNA genome is first converted to a superhelical dsDNA. Rep binds a specific region at the genome origin of replication. It introduces an endonucleolytic nick within the conserved sequence 5'-TAATATTAC-3' in the intergenic region of the genome present in all geminiviruses, thereby initiating the rolling circle replication (RCR). Following cleavage, binds covalently to the 5'-phosphate of DNA as a tyrosyl ester. The cleavage gives rise to a free 3'-OH that serves as a primer for the cellular DNA polymerase. The polymerase synthesizes the (+) strand DNA by rolling circle mechanism. After one round of replication, a Rep-catalyzed nucleotidyl transfer reaction releases a circular single-stranded virus genome, thereby terminating the replication. Displays origin-specific DNA cleavage, nucleotidyl transferase, ATPase and helicase activities. Acts as an inhibitor of C-sense gene transcription. The chain is Replication-associated protein from Megathyrsus maximus (PanSV).